Reading from the N-terminus, the 221-residue chain is Small ribosomal subunit protein uS3 (221 aa).

Residues Ile39–Lys108 form the KH type-2 domain.

The protein belongs to the universal ribosomal protein uS3 family. In terms of assembly, part of the 30S ribosomal subunit. Forms a tight complex with proteins S10 and S14.

Functionally, binds the lower part of the 30S subunit head. Binds mRNA in the 70S ribosome, positioning it for translation. The sequence is that of Small ribosomal subunit protein uS3 from Clostridium novyi (strain NT).